The primary structure comprises 247 residues: Lys-63-specific deubiquitinase BRCC36 (247 aa).

Residue Ala-2 is modified to N-acetylalanine. In terms of domain architecture, MPN spans 12-179; the sequence is VHLESDAFLV…YTCFQSIQAQ (168 aa). Zn(2+)-binding residues include His-122, His-124, and Asp-135. Residues 122-135 carry the JAMM motif motif; sequence HSHPHITVWPSHVD. Ser-189 is subject to Phosphoserine.

Belongs to the peptidase M67A family. BRCC36 subfamily. In terms of assembly, component of the ARISC complex, at least composed of UIMC1/RAP80, ABRAXAS1, BRCC3/BRCC36, BABAM2 and BABAM1/NBA1. Component of the BRCA1-A complex, at least composed of BRCA1, BARD1, UIMC1/RAP80, ABRAXAS1, BRCC3/BRCC36, BABAM2 and BABAM1/NBA1. In the BRCA1-A complex, interacts directly with ABRAXAS1 and BABAM2. Component of the BRISC complex, at least composed of ABRAXAS2, BRCC3/BRCC36, BABAM2 and BABAM1/NBA1. Identified in a complex with SHMT2 and the other subunits of the BRISC complex. In the BRISC complex, interacts directly with ABRAXAS2. Identified in a complex with ABRAXAS2 and NUMA1. The BRISC complex interacts with the CSN complex. Component of the BRCA1/BRCA2 containing complex (BRCC), which also contains BRCA1, BRCA2, BARD1, BABAM2 and RAD51. BRCC is a ubiquitin E3 ligase complex that enhances cellular survival following DNA damage. Interacts with BRCA1. Binds polyubiquitin. Interacts with PWWP2B. Interacts with HDAC1; this interaction is enhanced in the presence of PWWP2B. Zn(2+) serves as cofactor.

Its subcellular location is the nucleus. It is found in the cytoplasm. The protein resides in the cytoskeleton. It localises to the spindle pole. Metalloprotease that specifically cleaves 'Lys-63'-linked polyubiquitin chains. Does not have activity toward 'Lys-48'-linked polyubiquitin chains. Component of the BRCA1-A complex, a complex that specifically recognizes 'Lys-63'-linked ubiquitinated histones H2A and H2AX at DNA lesions sites, leading to target the BRCA1-BARD1 heterodimer to sites of DNA damage at double-strand breaks (DSBs). In the BRCA1-A complex, it specifically removes 'Lys-63'-linked ubiquitin on histones H2A and H2AX, antagonizing the RNF8-dependent ubiquitination at double-strand breaks (DSBs). Catalytic subunit of the BRISC complex, a multiprotein complex that specifically cleaves 'Lys-63'-linked ubiquitin in various substrates. Mediates the specific 'Lys-63'-specific deubiquitination associated with the COP9 signalosome complex (CSN), via the interaction of the BRISC complex with the CSN complex. The BRISC complex is required for normal mitotic spindle assembly and microtubule attachment to kinetochores via its role in deubiquitinating NUMA1. Plays a role in interferon signaling via its role in the deubiquitination of the interferon receptor IFNAR1; deubiquitination increases IFNAR1 activity by enhancing its stability and cell surface expression. Acts as a regulator of the NLRP3 inflammasome by mediating deubiquitination of NLRP3, leading to NLRP3 inflammasome assembly. Down-regulates the response to bacterial lipopolysaccharide (LPS) via its role in IFNAR1 deubiquitination. Deubiquitinates HDAC1 and PWWP2B leading to their stabilization. The chain is Lys-63-specific deubiquitinase BRCC36 (BRCC3) from Pongo abelii (Sumatran orangutan).